The sequence spans 188 residues: Elongation factor P (188 aa).

The protein belongs to the elongation factor P family.

Its subcellular location is the cytoplasm. It participates in protein biosynthesis; polypeptide chain elongation. Its function is as follows. Involved in peptide bond synthesis. Stimulates efficient translation and peptide-bond synthesis on native or reconstituted 70S ribosomes in vitro. Probably functions indirectly by altering the affinity of the ribosome for aminoacyl-tRNA, thus increasing their reactivity as acceptors for peptidyl transferase. This is Elongation factor P from Anaplasma marginale (strain St. Maries).